The sequence spans 373 residues: Aminomethyltransferase (373 aa).

It belongs to the GcvT family. The glycine cleavage system is composed of four proteins: P, T, L and H.

It carries out the reaction N(6)-[(R)-S(8)-aminomethyldihydrolipoyl]-L-lysyl-[protein] + (6S)-5,6,7,8-tetrahydrofolate = N(6)-[(R)-dihydrolipoyl]-L-lysyl-[protein] + (6R)-5,10-methylene-5,6,7,8-tetrahydrofolate + NH4(+). The glycine cleavage system catalyzes the degradation of glycine. The sequence is that of Aminomethyltransferase from Prochlorococcus marinus (strain SARG / CCMP1375 / SS120).